The sequence spans 399 residues: Succinate--CoA ligase [ADP-forming] subunit beta (399 aa).

One can recognise an ATP-grasp domain in the interval 9 to 254; the sequence is KELLAKYGVG…ETEEDPAEIE (246 aa). ATP contacts are provided by residues lysine 46, 53 to 55, valine 112, and glutamate 117; that span reads GRG. Asparagine 209 and aspartate 223 together coordinate Mg(2+). Substrate is bound by residues asparagine 274 and 331 to 333; that span reads GIM.

Belongs to the succinate/malate CoA ligase beta subunit family. As to quaternary structure, heterotetramer of two alpha and two beta subunits. The cofactor is Mg(2+).

The enzyme catalyses succinate + ATP + CoA = succinyl-CoA + ADP + phosphate. The catalysed reaction is GTP + succinate + CoA = succinyl-CoA + GDP + phosphate. Its pathway is carbohydrate metabolism; tricarboxylic acid cycle; succinate from succinyl-CoA (ligase route): step 1/1. In terms of biological role, succinyl-CoA synthetase functions in the citric acid cycle (TCA), coupling the hydrolysis of succinyl-CoA to the synthesis of either ATP or GTP and thus represents the only step of substrate-level phosphorylation in the TCA. The beta subunit provides nucleotide specificity of the enzyme and binds the substrate succinate, while the binding sites for coenzyme A and phosphate are found in the alpha subunit. In Novosphingobium aromaticivorans (strain ATCC 700278 / DSM 12444 / CCUG 56034 / CIP 105152 / NBRC 16084 / F199), this protein is Succinate--CoA ligase [ADP-forming] subunit beta.